Reading from the N-terminus, the 428-residue chain is Light-independent protochlorophyllide reductase subunit N (428 aa).

Residues Cys29, Cys54, and Cys115 each coordinate [4Fe-4S] cluster.

It belongs to the BchN/ChlN family. In terms of assembly, protochlorophyllide reductase is composed of three subunits; BchL, BchN and BchB. Forms a heterotetramer of two BchB and two BchN subunits. It depends on [4Fe-4S] cluster as a cofactor.

The enzyme catalyses chlorophyllide a + oxidized 2[4Fe-4S]-[ferredoxin] + 2 ADP + 2 phosphate = protochlorophyllide a + reduced 2[4Fe-4S]-[ferredoxin] + 2 ATP + 2 H2O. Its pathway is porphyrin-containing compound metabolism; bacteriochlorophyll biosynthesis (light-independent). Functionally, component of the dark-operative protochlorophyllide reductase (DPOR) that uses Mg-ATP and reduced ferredoxin to reduce ring D of protochlorophyllide (Pchlide) to form chlorophyllide a (Chlide). This reaction is light-independent. The NB-protein (BchN-BchB) is the catalytic component of the complex. This Cereibacter sphaeroides (strain ATCC 17025 / ATH 2.4.3) (Rhodobacter sphaeroides) protein is Light-independent protochlorophyllide reductase subunit N.